Consider the following 169-residue polypeptide: Ribosomal RNA large subunit methyltransferase H (169 aa).

Residues L85, G117, and 136-141 (LGELTW) each bind S-adenosyl-L-methionine.

This sequence belongs to the RNA methyltransferase RlmH family. In terms of assembly, homodimer.

The protein localises to the cytoplasm. It catalyses the reaction pseudouridine(1915) in 23S rRNA + S-adenosyl-L-methionine = N(3)-methylpseudouridine(1915) in 23S rRNA + S-adenosyl-L-homocysteine + H(+). Its function is as follows. Specifically methylates the pseudouridine at position 1915 (m3Psi1915) in 23S rRNA. The protein is Ribosomal RNA large subunit methyltransferase H of Brucella ovis (strain ATCC 25840 / 63/290 / NCTC 10512).